The sequence spans 1035 residues: Putative protein FAM47C (1035 aa).

Disordered stretches follow at residues 1–21 (MGDQ…TPWY) and 159–797 (LEDA…RRVS). Over residues 159–173 (LEDAGSCEGQEKTTD) the composition is skewed to basic and acidic residues. A compositionally biased stretch (pro residues) spans 380–392 (PEPPKTRVPPLRP). The span at 478 to 490 (PPEKDVSHLRPEP) shows a compositional bias: basic and acidic residues. Positions 533–544 (SLHQAPPESSVS) are enriched in polar residues. Basic and acidic residues-rich tracts occupy residues 611–622 (PETRVSHLRPEP), 683–694 (PETRVSHLRPEP), and 753–766 (EPLE…RPEP).

The protein belongs to the FAM47 family.

The chain is Putative protein FAM47C (FAM47C) from Homo sapiens (Human).